Here is a 220-residue protein sequence, read N- to C-terminus: Fructose-6-phosphate aldolase 1 (220 aa).

K85 (schiff-base intermediate with substrate) is an active-site residue.

The protein belongs to the transaldolase family. Type 3A subfamily. As to quaternary structure, homodecamer.

Its subcellular location is the cytoplasm. It carries out the reaction beta-D-fructose 6-phosphate = dihydroxyacetone + D-glyceraldehyde 3-phosphate. Catalyzes the reversible formation of fructose 6-phosphate from dihydroxyacetone and D-glyceraldehyde 3-phosphate via an aldolization reaction. This is Fructose-6-phosphate aldolase 1 (fsaA) from Escherichia coli O6:H1 (strain CFT073 / ATCC 700928 / UPEC).